We begin with the raw amino-acid sequence, 124 residues long: MRLIVHNMLSCNIKGVVNKFPLRIEAEKVTVKEVDFNPDFLRYMFAKIDWKALVDGARSMEYTELPDNAPDTTTLESDETFLRKFHHALLELHLEEGSLVCPETGRKFSVSKGIPNMLLHEDEV.

Residues 2–120 (RLIVHNMLSC…SKGIPNMLLH (119 aa)) enclose the TRM112 domain.

Belongs to the TRM112 family. In terms of assembly, interacts with TRM9. As to expression, expressed in anthers.

Functionally, acts as an activator of both rRNA/tRNA and protein methyltransferases. Required for TRM9 tRNA methyltransferase activity. The polypeptide is Multifunctional methyltransferase subunit TRM112 homolog B (Arabidopsis thaliana (Mouse-ear cress)).